Here is a 392-residue protein sequence, read N- to C-terminus: Succinate--CoA ligase [ADP-forming] subunit beta (392 aa).

Residues 9–248 (KGILKQFGVA…ITEEDPLEYE (240 aa)) enclose the ATP-grasp domain. ATP is bound by residues Lys-50, 57–59 (GRG), Glu-103, Met-106, and Glu-111. Mg(2+)-binding residues include Asn-203 and Asp-217. Residues Asn-268 and 325-327 (GIV) each bind substrate.

This sequence belongs to the succinate/malate CoA ligase beta subunit family. In terms of assembly, heterotetramer of two alpha and two beta subunits. Mg(2+) is required as a cofactor.

It catalyses the reaction succinate + ATP + CoA = succinyl-CoA + ADP + phosphate. It carries out the reaction GTP + succinate + CoA = succinyl-CoA + GDP + phosphate. It participates in carbohydrate metabolism; tricarboxylic acid cycle; succinate from succinyl-CoA (ligase route): step 1/1. Succinyl-CoA synthetase functions in the citric acid cycle (TCA), coupling the hydrolysis of succinyl-CoA to the synthesis of either ATP or GTP and thus represents the only step of substrate-level phosphorylation in the TCA. The beta subunit provides nucleotide specificity of the enzyme and binds the substrate succinate, while the binding sites for coenzyme A and phosphate are found in the alpha subunit. The sequence is that of Succinate--CoA ligase [ADP-forming] subunit beta from Chlorobaculum parvum (strain DSM 263 / NCIMB 8327) (Chlorobium vibrioforme subsp. thiosulfatophilum).